We begin with the raw amino-acid sequence, 221 residues long: Carbonic anhydrase (221 aa).

Zn(2+) contacts are provided by cysteine 38, aspartate 40, histidine 99, and cysteine 102.

This sequence belongs to the beta-class carbonic anhydrase family. Zn(2+) is required as a cofactor.

The catalysed reaction is hydrogencarbonate + H(+) = CO2 + H2O. The sequence is that of Carbonic anhydrase (cynT) from Helicobacter pylori (strain ATCC 700392 / 26695) (Campylobacter pylori).